The chain runs to 163 residues: Photosystem II extrinsic protein V (163 aa).

Positions 1–26 are cleaved as a signal peptide; that stretch reads MFKTYSKSFACILFCIFNIFVVSASA. Cys63, Cys66, His67, and Met130 together coordinate heme c.

Belongs to the cytochrome c family. PsbV subfamily. PSII is composed of 1 copy each of membrane proteins PsbA, PsbB, PsbC, PsbD, PsbE, PsbF, PsbH, PsbI, PsbJ, PsbK, PsbL, PsbM, PsbT, PsbY, PsbZ, Psb30/Ycf12, at least 3 peripheral proteins of the oxygen-evolving complex and a large number of cofactors. It forms dimeric complexes. Requires heme c as cofactor.

It is found in the plastid. The protein localises to the chloroplast thylakoid membrane. Its function is as follows. One of the extrinsic, lumenal subunits of photosystem II (PSII). PSII is a light-driven water plastoquinone oxidoreductase, using light energy to abstract electrons from H(2)O, generating a proton gradient subsequently used for ATP formation. The extrinsic proteins stabilize the structure of photosystem II oxygen-evolving complex (OEC), the ion environment of oxygen evolution and protect the OEC against heat-induced inactivation. The polypeptide is Photosystem II extrinsic protein V (Thalassiosira pseudonana (Marine diatom)).